Reading from the N-terminus, the 335-residue chain is Ketol-acid reductoisomerase (NADP(+)) (335 aa).

The KARI N-terminal Rossmann domain occupies 2–182 (AKIIYDNETT…GATRAGVYET (181 aa)). Residues 25-28 (YGSQ), R48, S51, S53, and 83-86 (DENQ) contribute to the NADP(+) site. The active site involves H108. Residue G134 participates in NADP(+) binding. One can recognise a KARI C-terminal knotted domain in the interval 183-328 (TFREETETDL…KQIRANIPWL (146 aa)). Mg(2+) is bound by residues D191, E195, E227, and E231. S252 is a binding site for substrate.

Belongs to the ketol-acid reductoisomerase family. Requires Mg(2+) as cofactor.

It carries out the reaction (2R)-2,3-dihydroxy-3-methylbutanoate + NADP(+) = (2S)-2-acetolactate + NADPH + H(+). The catalysed reaction is (2R,3R)-2,3-dihydroxy-3-methylpentanoate + NADP(+) = (S)-2-ethyl-2-hydroxy-3-oxobutanoate + NADPH + H(+). The protein operates within amino-acid biosynthesis; L-isoleucine biosynthesis; L-isoleucine from 2-oxobutanoate: step 2/4. It participates in amino-acid biosynthesis; L-valine biosynthesis; L-valine from pyruvate: step 2/4. In terms of biological role, involved in the biosynthesis of branched-chain amino acids (BCAA). Catalyzes an alkyl-migration followed by a ketol-acid reduction of (S)-2-acetolactate (S2AL) to yield (R)-2,3-dihydroxy-isovalerate. In the isomerase reaction, S2AL is rearranged via a Mg-dependent methyl migration to produce 3-hydroxy-3-methyl-2-ketobutyrate (HMKB). In the reductase reaction, this 2-ketoacid undergoes a metal-dependent reduction by NADPH to yield (R)-2,3-dihydroxy-isovalerate. This Methanosarcina barkeri (strain Fusaro / DSM 804) protein is Ketol-acid reductoisomerase (NADP(+)).